Reading from the N-terminus, the 177-residue chain is uncharacterized protein (177 aa).

This sequence to Synechocystis PCC 6803 slr1290 and sll0925.

This is an uncharacterized protein from Synechocystis sp. (strain ATCC 27184 / PCC 6803 / Kazusa).